Reading from the N-terminus, the 95-residue chain is Signal recognition particle 19 kDa protein (95 aa).

Belongs to the SRP19 family. Part of the signal recognition particle protein translocation system, which is composed of SRP and FtsY. Archaeal SRP consists of a 7S RNA molecule of 300 nucleotides and two protein subunits: SRP54 and SRP19.

Its subcellular location is the cytoplasm. Functionally, involved in targeting and insertion of nascent membrane proteins into the cytoplasmic membrane. Binds directly to 7S RNA and mediates binding of the 54 kDa subunit of the SRP. The protein is Signal recognition particle 19 kDa protein of Pyrobaculum islandicum (strain DSM 4184 / JCM 9189 / GEO3).